A 121-amino-acid chain; its full sequence is UPF0091 protein PH1428 (121 aa).

The protein belongs to the UPF0091 family.

This Pyrococcus horikoshii (strain ATCC 700860 / DSM 12428 / JCM 9974 / NBRC 100139 / OT-3) protein is UPF0091 protein PH1428.